A 178-amino-acid polypeptide reads, in one-letter code: Cell division protein SepF (178 aa).

Residues 21–46 (YESEQSVATHHDEERPQAQEREERRA) are compositionally biased toward basic and acidic residues. The tract at residues 21–65 (YESEQSVATHHDEERPQAQEREERRAPAPVREVVREMPTVDAEEE) is disordered.

This sequence belongs to the SepF family. In terms of assembly, homodimer. Interacts with FtsZ.

It localises to the cytoplasm. Cell division protein that is part of the divisome complex and is recruited early to the Z-ring. Probably stimulates Z-ring formation, perhaps through the cross-linking of FtsZ protofilaments. Its function overlaps with FtsA. This Paenarthrobacter aurescens (strain TC1) protein is Cell division protein SepF.